Consider the following 246-residue polypeptide: Homeobox protein SIX6 (246 aa).

Residues G128 to A187 constitute a DNA-binding region (homeobox). The tract at residues N190–I246 is disordered. Residues R191 to S201 show a composition bias toward polar residues. Phosphothreonine is present on T212. A compositionally biased stretch (low complexity) spans A219 to I246. S221, S225, S227, and S228 each carry phosphoserine.

It belongs to the SIX/Sine oculis homeobox family. Interacts with TLE4 and TLE5. As to expression, expressed in the developing and adult retina. Also expressed in the hypothalamic and the pituitary regions.

It is found in the nucleus. May be involved in eye development. This is Homeobox protein SIX6 (SIX6) from Homo sapiens (Human).